The chain runs to 130 residues: Fluoride-specific ion channel FluC (130 aa).

The next 4 membrane-spanning stretches (helical) occupy residues 4–24, 35–55, 68–88, and 99–119; these read MINV…RYFI, GFPI…GLLT, LNLF…TFSL, and AVFG…GVVL. The Na(+) site is built by Gly-78 and Thr-81.

Belongs to the fluoride channel Fluc/FEX (TC 1.A.43) family.

It localises to the cell membrane. It catalyses the reaction fluoride(in) = fluoride(out). With respect to regulation, na(+) is not transported, but it plays an essential structural role and its presence is essential for fluoride channel function. Its function is as follows. Fluoride-specific ion channel. Important for reducing fluoride concentration in the cell, thus reducing its toxicity. The polypeptide is Fluoride-specific ion channel FluC (Ruminiclostridium cellulolyticum (strain ATCC 35319 / DSM 5812 / JCM 6584 / H10) (Clostridium cellulolyticum)).